Reading from the N-terminus, the 968-residue chain is uncharacterized protein (968 aa).

The signal sequence occupies residues 1–27 (MHSWKKKLVVSQLALACTLAITSQANA). One can recognise an Autotransporter domain in the interval 703-968 (GLADNGGAWV…SANVGVKYTW (266 aa)).

This is an uncharacterized protein from Escherichia coli (strain K12).